The following is a 591-amino-acid chain: L-gulonolactone oxidase 2 (591 aa).

Positions 1–27 are cleaved as a signal peptide; it reads MAFTFPPSYRTLVGLYYIFTLMHTAVS. Positions 56–238 constitute an FAD-binding PCMH-type domain; sequence STCRAANVAY…SQVTFELQPM (183 aa).

The protein belongs to the oxygen-dependent FAD-linked oxidoreductase family. The cofactor is FAD.

It carries out the reaction L-gulono-1,4-lactone + O2 = L-ascorbate + H2O2 + H(+). Its pathway is cofactor biosynthesis; L-ascorbate biosynthesis. Functionally, catalyzes the oxidation of L-gulono-1,4-lactone to ascorbic acid. L-gulono-1,4-lactone is oxidized to hydrogen peroxide and L-xylo-hexulonolactone which spontaneously isomerizes to L-ascorbate. This is L-gulonolactone oxidase 2 from Arabidopsis thaliana (Mouse-ear cress).